Reading from the N-terminus, the 478-residue chain is Aspartyl/glutamyl-tRNA(Asn/Gln) amidotransferase subunit B (478 aa).

Belongs to the GatB/GatE family. GatB subfamily. Heterotrimer of A, B and C subunits.

The catalysed reaction is L-glutamyl-tRNA(Gln) + L-glutamine + ATP + H2O = L-glutaminyl-tRNA(Gln) + L-glutamate + ADP + phosphate + H(+). It catalyses the reaction L-aspartyl-tRNA(Asn) + L-glutamine + ATP + H2O = L-asparaginyl-tRNA(Asn) + L-glutamate + ADP + phosphate + 2 H(+). Its function is as follows. Allows the formation of correctly charged Asn-tRNA(Asn) or Gln-tRNA(Gln) through the transamidation of misacylated Asp-tRNA(Asn) or Glu-tRNA(Gln) in organisms which lack either or both of asparaginyl-tRNA or glutaminyl-tRNA synthetases. The reaction takes place in the presence of glutamine and ATP through an activated phospho-Asp-tRNA(Asn) or phospho-Glu-tRNA(Gln). The polypeptide is Aspartyl/glutamyl-tRNA(Asn/Gln) amidotransferase subunit B (Dichelobacter nodosus (strain VCS1703A)).